We begin with the raw amino-acid sequence, 316 residues long: Bifunctional peptidase and (3S)-lysyl hydroxylase JMJD7 (316 aa).

Cys-19 is subject to Cysteine sulfenic acid (-SOH). The 2-oxoglutarate site is built by Tyr-123 and Thr-172. Position 123 (Tyr-123) interacts with succinate. The JmjC domain maps to 124 to 310; that stretch reads IQKQNSNLSV…YCYYRMLEQM (187 aa). Residues His-175 and Asp-177 each coordinate Fe cation. The 2-oxoglutarate site is built by Asn-181, Tyr-183, and Lys-190. Residues Tyr-183 and Lys-190 each contribute to the succinate site. His-278 contacts Fe cation. Position 292 (Trp-292) interacts with 2-oxoglutarate.

In terms of assembly, homodimer; disulfide-linked. Fe(2+) is required as a cofactor. In terms of tissue distribution, expressed in the pars intercerebralis and fan-shaped body, regions known to be involved in sleep.

The protein resides in the nucleus. It localises to the cytoplasm. It catalyses the reaction L-lysyl-[protein] + 2-oxoglutarate + O2 = (3S)-3-hydroxy-L-lysyl-[protein] + succinate + CO2. Functionally, bifunctional enzyme that acts both as an endopeptidase and 2-oxoglutarate-dependent monooxygenase. Endopeptidase that cleaves histones N-terminal tails at the carboxyl side of methylated arginine or lysine residues, to generate 'tailless nucleosomes', which may trigger transcription elongation. Hydroxylates the guanylate binding protein 128up. May be involved in regulation of behavior and circadian rhythms. In Drosophila melanogaster (Fruit fly), this protein is Bifunctional peptidase and (3S)-lysyl hydroxylase JMJD7.